A 955-amino-acid chain; its full sequence is Protein MEI2-like 3 (955 aa).

The interval 64 to 83 is disordered; sequence IQPNGANHAGDPETPGGQAF. 2 RRM domains span residues 270–343 and 355–428; these read RTLV…FSFP and GMLV…LSQH. 2 disordered regions span residues 436 to 465 and 897 to 955; these read RQQH…KLGT and NAGD…LEQT. Over residues 935 to 955 the composition is skewed to polar residues; the sequence is DQESNSVGTANSTCRTTLEQT.

In terms of biological role, probable RNA-binding protein that may play a role in growth regulation. The protein is Protein MEI2-like 3 (ML3) of Oryza sativa subsp. japonica (Rice).